We begin with the raw amino-acid sequence, 224 residues long: EEF1A lysine methyltransferase 3 (224 aa).

Residues Trp58, 84-86, Asp105, Trp134, and Ala151 contribute to the S-adenosyl-L-methionine site; that span reads GAG.

This sequence belongs to the methyltransferase superfamily. METTL21 family.

Its subcellular location is the cytoplasm. It is found in the cytoskeleton. The protein localises to the microtubule organizing center. It localises to the centrosome. The catalysed reaction is L-lysyl-[protein] + 3 S-adenosyl-L-methionine = N(6),N(6),N(6)-trimethyl-L-lysyl-[protein] + 3 S-adenosyl-L-homocysteine + 3 H(+). The enzyme catalyses L-lysyl-[protein] + S-adenosyl-L-methionine = N(6)-methyl-L-lysyl-[protein] + S-adenosyl-L-homocysteine + H(+). It catalyses the reaction N(6)-methyl-L-lysyl-[protein] + S-adenosyl-L-methionine = N(6),N(6)-dimethyl-L-lysyl-[protein] + S-adenosyl-L-homocysteine + H(+). It carries out the reaction N(6),N(6)-dimethyl-L-lysyl-[protein] + S-adenosyl-L-methionine = N(6),N(6),N(6)-trimethyl-L-lysyl-[protein] + S-adenosyl-L-homocysteine + H(+). Protein-lysine methyltransferase that selectively mono-, di- and trimethylates 'Lys-165' of the translation elongation factors EEF1A1 and EEF1A2 in an aminoacyl-tRNA and GTP-dependent manner. EEF1A1 methylation by EEF1AKMT3 is dynamic as well as inducible by stress conditions, such as ER-stress, and plays a regulatory role on mRNA translation. This is EEF1A lysine methyltransferase 3 from Xenopus tropicalis (Western clawed frog).